A 242-amino-acid polypeptide reads, in one-letter code: ATP synthase subunit a (242 aa).

Transmembrane regions (helical) follow at residues 29–49, 84–104, 114–134, 140–160, 189–209, and 210–230; these read SAAYMLLASVLALTYFYLAFS, FVPVIFTLFVFILFCNLFGMI, IIITFALAILVFLMVTIVGFV, FLSLFLPHGTPLWLAPLMIII, VIASFVVTLMIYLKFLPIPLM, and VILIGFEIFVAILQAYIFTIL.

The protein belongs to the ATPase A chain family. In terms of assembly, F-type ATPases have 2 components, CF(1) - the catalytic core - and CF(0) - the membrane proton channel. CF(1) has five subunits: alpha(3), beta(3), gamma(1), delta(1), epsilon(1). CF(0) has three main subunits: a(1), b(2) and c(9-12). The alpha and beta chains form an alternating ring which encloses part of the gamma chain. CF(1) is attached to CF(0) by a central stalk formed by the gamma and epsilon chains, while a peripheral stalk is formed by the delta and b chains.

Its subcellular location is the cell inner membrane. Key component of the proton channel; it plays a direct role in the translocation of protons across the membrane. This chain is ATP synthase subunit a, found in Rickettsia bellii (strain RML369-C).